The chain runs to 64 residues: Prokaryotic ubiquitin-like protein Pup (64 aa).

Residues 1–37 (MAQEQTKRGGGGGDDEDVTGTTAAGQERREKLAQDTD) form a disordered region. The ARC ATPase binding stretch occupies residues 21–58 (TTAAGQERREKLAQDTDDLLDEIDDVLEENAEDFVRAY). Residues 25-52 (GQERREKLAQDTDDLLDEIDDVLEENAE) adopt a coiled-coil conformation. At Gln64 the chain carries Deamidated glutamine. An Isoglutamyl lysine isopeptide (Gln-Lys) (interchain with K-? in acceptor proteins) cross-link involves residue Gln64.

Belongs to the prokaryotic ubiquitin-like protein family. In terms of assembly, strongly interacts with the proteasome-associated ATPase ARC through a hydrophobic interface; the interacting region of Pup lies in its C-terminal half. There is one Pup binding site per ARC hexamer ring. Is modified by deamidation of its C-terminal glutamine to glutamate by the deamidase Dop, a prerequisite to the subsequent pupylation process.

Its pathway is protein degradation; proteasomal Pup-dependent pathway. Functionally, protein modifier that is covalently attached to lysine residues of substrate proteins, thereby targeting them for proteasomal degradation. The tagging system is termed pupylation. This is Prokaryotic ubiquitin-like protein Pup from Mycobacterium marinum (strain ATCC BAA-535 / M).